A 200-amino-acid polypeptide reads, in one-letter code: Max dimerization protein 3 (200 aa).

Disordered regions lie at residues 26 to 56 and 134 to 164; these read EHGY…DNVR and LLPP…QEDL. The bHLH domain occupies 54-106; it reads NVRSVHNELEKHRRAQLRRCLEQLKQQVPLSMENSRHTTLSLLHRAKQHIKKL.

Efficient DNA binding requires dimerization with another bHLH protein. Binds DNA as a heterodimer with MAX.

The protein localises to the nucleus. Functionally, transcriptional repressor. Binds with MAX to form a sequence-specific DNA-binding protein complex which recognizes the core sequence 5'-CAC[GA]TG-3'. This Xenopus tropicalis (Western clawed frog) protein is Max dimerization protein 3 (mxd3).